Reading from the N-terminus, the 319-residue chain is MVGEMETKEKPKPTPDYLMQLMNDKKLMSSLPNFCGIFNHLERLLDEEIGRVRKDMYNDTLNGSTDKRTSELPDAVGPIAQLQEKLYVPVKEYPDFNFVGRILGPRGLTAKQLEAETGCKIMVRGKGSMRDKKKEEQNRGKPNWEHLNEDLHVLITVEDSQNRAEIKLKRAVEEVKKLLVPAAEGEDSLKKMQLMELAILNGTYRDANIKSPALAFSLAATAQAPRIMTGPTPVMPNAALRTPAPTAPTLMPLIRQIQTSALMPTGTPHPTATLLPQTPESGIIYAPYDYPYALAPATSILEYPIDSSGVLGMAFPTKG.

The 67-residue stretch at 87 to 153 (YVPVKEYPDF…WEHLNEDLHV (67 aa)) folds into the KH domain. Positions 276 to 279 (PQTP) match the SH3-binding motif.

The protein belongs to the quaking family. Homodimer; does not require RNA to homodimerize.

The protein localises to the cytoplasm. It is found in the nucleus. RNA reader protein, which recognizes and binds specific RNAs, thereby regulating RNA metabolic processes, such as pre-mRNA splicing, circular RNA (circRNA) formation, mRNA export, mRNA stability and/or translation. Involved in various cellular processes, such as mRNA storage into stress granules, apoptosis, interferon response, glial cell fate and development. Binds to the 5'-NACUAAY-N(1,20)-UAAY-3' RNA core sequence. Acts as a mRNA modification reader that specifically recognizes and binds mRNA transcripts modified by internal N(7)-methylguanine (m7G). Promotes the formation of circular RNAs (circRNAs): acts by binding to sites flanking circRNA-forming exons. CircRNAs are produced by back-splicing circularization of pre-mRNAs. Required to protect and promote stability of mRNAs which promotes oligodendrocyte differentiation. Acts as an important regulator of muscle development: required during early skeletal myofibril formation by regulating the accumulation of the muscle-specific tropomyosin-3 (tpm3) transcripts. The chain is Protein quaking-B (qki2) from Danio rerio (Zebrafish).